The primary structure comprises 325 residues: MSLMIYSVLVAFVVSLIQGPILIPLLHKFKFGQNIRSEGPESHKKKSGTPTMGGVIFIISSVITVFVVSRHPSFETKLAIFAFVAFGIIGLIDDSLKIIHKENEGLKAYQKMILLLIVSSIIGFYAYNNPRIGSEIIVPFVHKTWNLGMFYIPFIIFYFAATTNAVNLTDGLDGLATSITLLVMTFFAVVSYATGNYNLAVFCSIVAGALLGFLKYNAYPAQVFMGDTGSLALGGVVGAVAMMLKLPLIVIIVGGIYLAEALSVILQVGSFKLRGKRIFKMSPIHHHFELSGWHETKIVSIFSIITVILCLIGFLSLIKMNGFSL.

Helical transmembrane passes span 3–23 (LMIYSVLVAFVVSLIQGPILI), 48–68 (GTPTMGGVIFIISSVITVFVV), 79–99 (AIFAFVAFGIIGLIDDSLKII), 106–126 (LKAYQKMILLLIVSSIIGFYA), 136–156 (IIVPFVHKTWNLGMFYIPFII), 174–194 (GLATSITLLVMTFFAVVSYAT), 199–219 (LAVFCSIVAGALLGFLKYNAY), 223–243 (VFMGDTGSLALGGVVGAVAMM), 246–266 (LPLIVIIVGGIYLAEALSVIL), and 298–318 (IVSIFSIITVILCLIGFLSLI).

The protein belongs to the glycosyltransferase 4 family. MraY subfamily. Mg(2+) serves as cofactor.

It is found in the cell membrane. The catalysed reaction is UDP-N-acetyl-alpha-D-muramoyl-L-alanyl-gamma-D-glutamyl-meso-2,6-diaminopimeloyl-D-alanyl-D-alanine + di-trans,octa-cis-undecaprenyl phosphate = di-trans,octa-cis-undecaprenyl diphospho-N-acetyl-alpha-D-muramoyl-L-alanyl-D-glutamyl-meso-2,6-diaminopimeloyl-D-alanyl-D-alanine + UMP. It functions in the pathway cell wall biogenesis; peptidoglycan biosynthesis. Functionally, catalyzes the initial step of the lipid cycle reactions in the biosynthesis of the cell wall peptidoglycan: transfers peptidoglycan precursor phospho-MurNAc-pentapeptide from UDP-MurNAc-pentapeptide onto the lipid carrier undecaprenyl phosphate, yielding undecaprenyl-pyrophosphoryl-MurNAc-pentapeptide, known as lipid I. The polypeptide is Phospho-N-acetylmuramoyl-pentapeptide-transferase (Clostridium novyi (strain NT)).